The primary structure comprises 156 residues: Small ribosomal subunit protein uS7 (156 aa).

The protein belongs to the universal ribosomal protein uS7 family. As to quaternary structure, part of the 30S ribosomal subunit. Contacts proteins S9 and S11.

One of the primary rRNA binding proteins, it binds directly to 16S rRNA where it nucleates assembly of the head domain of the 30S subunit. Is located at the subunit interface close to the decoding center, probably blocks exit of the E-site tRNA. The polypeptide is Small ribosomal subunit protein uS7 (Aliivibrio fischeri (strain MJ11) (Vibrio fischeri)).